The sequence spans 301 residues: Probable alpha-L-glutamate ligase (301 aa).

The 184-residue stretch at 104–287 (LQLLSRKGIG…VADEIIRFIE (184 aa)) folds into the ATP-grasp domain. ATP contacts are provided by residues lysine 141, 178-179 (EF), aspartate 187, and 211-213 (RSN). Positions 248, 260, and 262 each coordinate Mg(2+). Positions 248, 260, and 262 each coordinate Mn(2+).

Belongs to the RimK family. Mg(2+) is required as a cofactor. Mn(2+) serves as cofactor.

This chain is Probable alpha-L-glutamate ligase, found in Syntrophotalea carbinolica (strain DSM 2380 / NBRC 103641 / GraBd1) (Pelobacter carbinolicus).